The chain runs to 1624 residues: Latent-transforming growth factor beta-binding protein 4 (1624 aa).

The first 27 residues, 1–27, serve as a signal peptide directing secretion; that stretch reads MPRPGTSGRRPLLLVLLLPLFAAATSA. Positions 125-146 are disordered; it reads RRPRGPGGRGLLRRRPPQRAPA. One can recognise an EGF-like 1 domain in the interval 149–181; the sequence is APVLCPLICHNGGVCVKPDRCLCPPDFAGKFCQ. 6 disulfides stabilise this stretch: cysteine 153-cysteine 163, cysteine 157-cysteine 169, cysteine 171-cysteine 180, cysteine 289-cysteine 311, cysteine 298-cysteine 324, and cysteine 312-cysteine 327. Positions 287–339 constitute a TB 1 domain; the sequence is GYCFRELRGGECASPLPGLRTQEVCCRGAGLAWGVHDCQLCSERLGNSERVSA. N-linked (GlcNAc...) asparagine glycosylation is present at asparagine 352. The EGF-like 2; calcium-binding domain maps to 357-397; the sequence is DVDECATGGRCQHGECANTRGGYTCVCPDGFLLDSSRSSCI. Intrachain disulfides connect cysteine 361–cysteine 372, cysteine 367–cysteine 381, cysteine 383–cysteine 396, cysteine 409–cysteine 431, cysteine 418–cysteine 444, cysteine 432–cysteine 447, and cysteine 433–cysteine 459. Positions 407-459 constitute a TB 2 domain; that stretch reads GPCFRVLRDGGCSLPILRNITKQICCCSRVGKAWGRGCQLCPPFGSEGFREIC. Asparagine 425 carries an N-linked (GlcNAc...) asparagine glycan. The interval 474-546 is disordered; the sequence is YNTRPLGQEP…PEIPESGPSS (73 aa). The span at 487–500 shows a compositional bias: polar residues; it reads SLSQPRTLPATSRP. A compositionally biased stretch (basic and acidic residues) spans 508–522; that stretch reads HRLEPRPEPRPDPRP. In terms of domain architecture, EGF-like 3 spans 545–586; the sequence is SSGMCQRNPQVCGPGRCISRPSGYTCACDSGFRLSPQGTRCI. Disulfide bonds link cysteine 549-cysteine 561, cysteine 556-cysteine 570, cysteine 572-cysteine 585, cysteine 591-cysteine 603, cysteine 598-cysteine 612, cysteine 614-cysteine 627, cysteine 633-cysteine 645, cysteine 640-cysteine 654, cysteine 656-cysteine 669, cysteine 675-cysteine 687, cysteine 682-cysteine 696, cysteine 698-cysteine 707, cysteine 714-cysteine 726, cysteine 721-cysteine 735, cysteine 737-cysteine 750, cysteine 756-cysteine 768, cysteine 763-cysteine 777, cysteine 779-cysteine 792, cysteine 838-cysteine 851, cysteine 845-cysteine 860, cysteine 862-cysteine 876, cysteine 882-cysteine 894, cysteine 888-cysteine 903, cysteine 905-cysteine 918, cysteine 924-cysteine 935, cysteine 930-cysteine 944, cysteine 946-cysteine 959, cysteine 1053-cysteine 1065, cysteine 1059-cysteine 1074, and cysteine 1076-cysteine 1089. Residues 587–628 enclose the EGF-like 4; calcium-binding domain; sequence DVDECRRVPPPCAPGRCENSPGSFRCVCGPGFRAGPRAAECL. In terms of domain architecture, EGF-like 5; calcium-binding spans 629–670; sequence DVDECHRVPPPCDLGRCENTPGSFLCVCPAGYQAAPHGASCQ. The 38-residue stretch at 671–708 folds into the EGF-like 6; calcium-binding domain; it reads DVDECTQSPGLCGRGACKNLPGSFRCVCPAGFRGSACE. The 42-residue stretch at 710 to 751 folds into the EGF-like 7; calcium-binding domain; sequence DVDECAQEPPPCGPGRCDNTAGSFHCACPAGFRSRGPGAPCQ. Residues 752–793 enclose the EGF-like 8; calcium-binding domain; the sequence is DVDECARSPPPCTYGRCENTEGSFQCVCPMGFQPNTAGSECE. Residues 834–877 form the EGF-like 9; calcium-binding domain; that stretch reads DVDECSSGAPPCGPHGHCTNTEGSFRCSCAPGYRAPSGRPGPCA. An EGF-like 10; calcium-binding domain is found at 878 to 919; the sequence is DVNECLEGDFCFPHGECLNTDGSFACTCAPGYRPGPRGASCL. The EGF-like 11; calcium-binding domain maps to 920–960; sequence DVDECSEEDLCQSGICTNTDGSFECICPPGHRAGPDLASCL. Residues 1049–1090 enclose the EGF-like 12; calcium-binding domain; it reads DVDECRNRSFCGAHAVCQNLPGSFQCLCDQGYEGARDGRHCV. N-linked (GlcNAc...) asparagine glycosylation occurs at asparagine 1055. The interval 1130–1179 is disordered; it reads GRCVPPRTSAGTFPGSQPQAPASPVLPARPPPPPLPRRPSTPRQGPVGSG. The span at 1138–1149 shows a compositional bias: polar residues; it reads SAGTFPGSQPQA. A compositionally biased stretch (pro residues) spans 1156 to 1168; the sequence is PARPPPPPLPRRP. Residues 1181–1235 form the TB 3 domain; that stretch reads RECYFDTAAPDACDNILARNVTWQECCCTVGEGWGSGCRIQQCPGTETAEYQSLC. Cystine bridges form between cysteine 1183–cysteine 1206, cysteine 1193–cysteine 1218, cysteine 1207–cysteine 1223, cysteine 1208–cysteine 1235, cysteine 1257–cysteine 1270, cysteine 1265–cysteine 1279, cysteine 1281–cysteine 1294, cysteine 1300–cysteine 1312, cysteine 1307–cysteine 1321, and cysteine 1323–cysteine 1336. Asparagine 1200 carries an N-linked (GlcNAc...) asparagine glycan. Positions 1253–1295 constitute an EGF-like 13; calcium-binding domain; that stretch reads DVDECQLFRDQVCKSGVCVNTAPGYSCYCSNGYYYHTQRLECI. The EGF-like 14; calcium-binding domain maps to 1296-1337; the sequence is DNDECADEEPACEGGRCVNTVGSYHCTCEPPLVLDGSQRRCV. An N-linked (GlcNAc...) asparagine glycan is attached at asparagine 1339. One can recognise a TB 4 domain in the interval 1349 to 1402; the sequence is GVCWQEVGADLVCSHPRLDRQATYTECCCLYGEAWGMDCALCPAQDSDDFEALC. 4 disulfide bridges follow: cysteine 1351–cysteine 1375, cysteine 1361–cysteine 1387, cysteine 1376–cysteine 1390, and cysteine 1377–cysteine 1402. Residues 1446-1458 are compositionally biased toward pro residues; sequence ALPYDPYPPPPGP. Positions 1446–1524 are disordered; that stretch reads ALPYDPYPPP…PPEGGSYAGS (79 aa). Positions 1501–1510 are enriched in basic and acidic residues; that stretch reads RSRDTRRSFP. EGF-like domains lie at 1533-1573 and 1574-1618; these read EAEE…MACV and DINE…HHCA. Disulfide bonds link cysteine 1537–cysteine 1548, cysteine 1543–cysteine 1557, cysteine 1559–cysteine 1572, cysteine 1578–cysteine 1593, cysteine 1588–cysteine 1602, and cysteine 1604–cysteine 1617.

It belongs to the LTBP family. In terms of assembly, forms part of the large latent transforming growth factor beta precursor complex; removal is essential for activation of complex. Interacts with LTBP1 and TGFB1. Interacts with EFEMP2; this interaction promotes fibrillar deposition of EFEMP2. In terms of processing, contains hydroxylated asparagine residues. In terms of tissue distribution, highly expressed in heart, skeletal muscle, pancreas, uterus, and small intestine. Weakly expressed in placenta and lung.

Its subcellular location is the secreted. It is found in the extracellular space. The protein localises to the extracellular matrix. Key regulator of transforming growth factor beta (TGFB1, TGFB2 and TGFB3) that controls TGF-beta activation by maintaining it in a latent state during storage in extracellular space. Associates specifically via disulfide bonds with the Latency-associated peptide (LAP), which is the regulatory chain of TGF-beta, and regulates integrin-dependent activation of TGF-beta. The protein is Latent-transforming growth factor beta-binding protein 4 (LTBP4) of Homo sapiens (Human).